The following is a 279-amino-acid chain: Probable endonuclease 4 (279 aa).

Zn(2+)-binding residues include histidine 67, histidine 107, glutamate 144, aspartate 177, histidine 180, histidine 214, aspartate 227, histidine 229, and glutamate 259.

The protein belongs to the AP endonuclease 2 family. It depends on Zn(2+) as a cofactor.

It catalyses the reaction Endonucleolytic cleavage to 5'-phosphooligonucleotide end-products.. Its function is as follows. Endonuclease IV plays a role in DNA repair. It cleaves phosphodiester bonds at apurinic or apyrimidinic (AP) sites, generating a 3'-hydroxyl group and a 5'-terminal sugar phosphate. In Sulfurihydrogenibium sp. (strain YO3AOP1), this protein is Probable endonuclease 4.